Here is a 264-residue protein sequence, read N- to C-terminus: Thymidylate synthase (264 aa).

R21 serves as a coordination point for dUMP. A (6R)-5,10-methylene-5,6,7,8-tetrahydrofolate-binding site is contributed by H51. Residue 126-127 (RR) participates in dUMP binding. Catalysis depends on C146, which acts as the Nucleophile. DUMP is bound by residues 166–169 (RSCD), N177, and 207–209 (HLY). D169 serves as a coordination point for (6R)-5,10-methylene-5,6,7,8-tetrahydrofolate. A263 is a binding site for (6R)-5,10-methylene-5,6,7,8-tetrahydrofolate.

This sequence belongs to the thymidylate synthase family. Bacterial-type ThyA subfamily. Homodimer.

The protein localises to the cytoplasm. It catalyses the reaction dUMP + (6R)-5,10-methylene-5,6,7,8-tetrahydrofolate = 7,8-dihydrofolate + dTMP. It functions in the pathway pyrimidine metabolism; dTTP biosynthesis. Functionally, catalyzes the reductive methylation of 2'-deoxyuridine-5'-monophosphate (dUMP) to 2'-deoxythymidine-5'-monophosphate (dTMP) while utilizing 5,10-methylenetetrahydrofolate (mTHF) as the methyl donor and reductant in the reaction, yielding dihydrofolate (DHF) as a by-product. This enzymatic reaction provides an intracellular de novo source of dTMP, an essential precursor for DNA biosynthesis. In Pectobacterium atrosepticum (strain SCRI 1043 / ATCC BAA-672) (Erwinia carotovora subsp. atroseptica), this protein is Thymidylate synthase.